Reading from the N-terminus, the 154-residue chain is Aspartate carbamoyltransferase regulatory chain (154 aa).

Residues cysteine 110, cysteine 115, cysteine 136, and cysteine 139 each coordinate Zn(2+).

Belongs to the PyrI family. As to quaternary structure, contains catalytic and regulatory chains. Requires Zn(2+) as cofactor.

In terms of biological role, involved in allosteric regulation of aspartate carbamoyltransferase. The polypeptide is Aspartate carbamoyltransferase regulatory chain (Halobacterium salinarum (strain ATCC 700922 / JCM 11081 / NRC-1) (Halobacterium halobium)).